The primary structure comprises 204 residues: Probable GTP-binding protein EngB (204 aa).

One can recognise an EngB-type G domain in the interval Gly-22–Ile-197. Residues Gly-30 to Ser-37, Gly-57 to Gln-61, Asp-75 to Gly-78, Asn-144 to Asp-147, and Phe-176 to Ala-178 contribute to the GTP site. The Mg(2+) site is built by Ser-37 and Thr-59.

It belongs to the TRAFAC class TrmE-Era-EngA-EngB-Septin-like GTPase superfamily. EngB GTPase family. The cofactor is Mg(2+).

Functionally, necessary for normal cell division and for the maintenance of normal septation. The protein is Probable GTP-binding protein EngB of Ruminiclostridium cellulolyticum (strain ATCC 35319 / DSM 5812 / JCM 6584 / H10) (Clostridium cellulolyticum).